A 2637-amino-acid chain; its full sequence is Nonribisomal peptide synthetase valB (2637 aa).

Positions Met-1–Thr-376 are condensation 1. Residues Ser-413–Leu-803 are adenylation 1. In terms of domain architecture, Carrier 1 spans Pro-946 to Thr-1022. Ser-983 bears the O-(pantetheine 4'-phosphoryl)serine mark. A disordered region spans residues Ser-1016–Arg-1045. The tract at residues Val-1063 to Gln-1506 is condensation 2. Residues Ala-1524–Leu-1933 form an adenylation 2 region. A Carrier 2 domain is found at Lys-2078–Asn-2154. Ser-2115 is subject to O-(pantetheine 4'-phosphoryl)serine. The tract at residues Glu-2193–Ala-2582 is condensation 3.

Belongs to the NRP synthetase family.

It functions in the pathway secondary metabolite biosynthesis. In terms of biological role, nonribisomal peptide synthetase; part of the gene cluster that mediates the biosynthesis of valactamides. The first step of the pathway is performed by the highly reducing polyketide synthase valA that produces the polyketide part of the final products. An acetyl starter unit is incorporated by the ketosynthase domain of valA, and subsequently 6 malonyl-CoA-derived ketide units are incorporated and fully reduced to their respective alkane forms by the action of the ketoreductase, dehydratase, and enoylreductase domains (except for the penultimate unit, which is reduced only to the alkene). The final five ketide units are each proposed to be alpha-methylated by the methyltransferase domain before ketone reduction by the ketoreductase domain. The C1 domain of the nonribisomal peptide synthetase valB then catalyzes amide bond formation between the heptaketide chain and L-valine (L-Val) attached to the T1 domain. The C2 domain incorporating L-isoleucine (L-Ile) then carries out chain elongation, which is followed by macrolactonization by the Ct domain to release the final product. The sequence is that of Nonribisomal peptide synthetase valB from Aspergillus terreus.